Reading from the N-terminus, the 828-residue chain is Isethionate sulfite-lyase (828 aa).

The region spanning 30 to 698 (ERVFTILESF…VVSATPNGRK (669 aa)) is the PFL domain. Residues Arg187, Gln191, 466-468 (CTE), and Arg676 each bind 2-hydroxyethane-1-sulfonate. The active-site Cysteine radical intermediate is the Cys466. Glu468 functions as the Proton acceptor in the catalytic mechanism. In terms of domain architecture, Glycine radical spans 705–828 (DGSSASHGAD…LIARTGHDVM (124 aa)). Gly803 carries the post-translational modification Glycine radical.

Belongs to the glycyl radical enzyme (GRE) family. Homodimer. Post-translationally, requires the activating protein IseH to generate the key active site glycyl radical on Gly-803 that is involved in catalysis.

The catalysed reaction is 2-hydroxyethane-1-sulfonate = acetaldehyde + sulfite + H(+). It functions in the pathway organosulfur degradation; alkanesulfonate degradation. In terms of biological role, involved in an anaerobic respiration pathway that converts the sulfonate isethionate (2-hydroxyethanesulfonate) to ammonia, acetate and sulfide. Catalyzes the radical-mediated C-S bond cleavage of isethionate (2-hydroxyethanesulfonate) to form sulfite and acetaldehyde. Shows no activity with taurine or ethanolamine as substrates. The chain is Isethionate sulfite-lyase from Nitratidesulfovibrio vulgaris (strain ATCC 29579 / DSM 644 / CCUG 34227 / NCIMB 8303 / VKM B-1760 / Hildenborough) (Desulfovibrio vulgaris).